Reading from the N-terminus, the 148-residue chain is Transcription antitermination protein NusB (148 aa).

The protein belongs to the NusB family.

In terms of biological role, involved in transcription antitermination. Required for transcription of ribosomal RNA (rRNA) genes. Binds specifically to the boxA antiterminator sequence of the ribosomal RNA (rrn) operons. The protein is Transcription antitermination protein NusB of Aquifex aeolicus (strain VF5).